The following is a 383-amino-acid chain: F-box/kelch-repeat protein At2g29830 (383 aa).

Residues 1–21 are disordered; that stretch reads MVVLSEIPGDPNEDNQNENPQ. Residues 11–21 show a composition bias toward acidic residues; sequence PNEDNQNENPQ. The F-box domain maps to 27–73; that stretch reads LPILLQLPEELIASIVALIPRCHYPSLSLVSRAFRHLITSQELYVAR. Kelch repeat units lie at residues 130 to 178, 179 to 224, 226 to 272, 274 to 317, and 324 to 370; these read KMYV…IIDG, RIYV…FITY, VMQG…VVGD, LYAL…YTST, and KLVI…RDLP.

In Arabidopsis thaliana (Mouse-ear cress), this protein is F-box/kelch-repeat protein At2g29830.